Here is a 575-residue protein sequence, read N- to C-terminus: Hemagglutinin-neuraminidase (575 aa).

Over 1 to 34 (MAEKGKTNSSYWSTTRNDNSTVNTYIDTPAGKTH) the chain is Intravirion. Residues 35 to 55 (IWLLIATTMHTILSFIIMILC) traverse the membrane as a helical segment. Over 56-575 (IDLIIKQDTC…SIPKICKITS (520 aa)) the chain is Virion surface. Residue asparagine 77 is glycosylated (N-linked (GlcNAc...) asparagine; by host). Intrachain disulfides connect cysteine 192–cysteine 216, cysteine 258–cysteine 271, cysteine 357–cysteine 469, and cysteine 463–cysteine 473. The involved in neuraminidase activity stretch occupies residues 254–259 (NRKSCS). 2 N-linked (GlcNAc...) asparagine; by host glycosylation sites follow: asparagine 499 and asparagine 511. Cysteines 535 and 544 form a disulfide.

The protein belongs to the paramyxoviruses hemagglutinin-neuraminidase family. Homotetramer; composed of disulfide-linked homodimers. Interacts with F protein trimer.

The protein localises to the virion membrane. The protein resides in the host cell membrane. The catalysed reaction is Hydrolysis of alpha-(2-&gt;3)-, alpha-(2-&gt;6)-, alpha-(2-&gt;8)- glycosidic linkages of terminal sialic acid residues in oligosaccharides, glycoproteins, glycolipids, colominic acid and synthetic substrates.. Attaches the virus to sialic acid-containing cell receptors and thereby initiating infection. Binding of HN protein to the receptor induces a conformational change that allows the F protein to trigger virion/cell membranes fusion. Functionally, neuraminidase activity ensures the efficient spread of the virus by dissociating the mature virions from the neuraminic acid containing glycoproteins. The sequence is that of Hemagglutinin-neuraminidase (HN) from Human parainfluenza 1 virus (strain Washington/1957) (HPIV-1).